A 224-amino-acid chain; its full sequence is Ribonuclease 3 (224 aa).

An RNase III domain is found at 4-127 (IEKLERSLTY…IIGAIHLEAG (124 aa)). A Mg(2+)-binding site is contributed by Glu-40. Asp-44 is an active-site residue. 2 residues coordinate Mg(2+): Asp-113 and Glu-116. The active site involves Glu-116. One can recognise a DRBM domain in the interval 154-223 (DYKTKLQEIT…AKIALEKLGA (70 aa)).

This sequence belongs to the ribonuclease III family. In terms of assembly, homodimer. Requires Mg(2+) as cofactor.

The protein localises to the cytoplasm. The catalysed reaction is Endonucleolytic cleavage to 5'-phosphomonoester.. Digests double-stranded RNA. Involved in the processing of primary rRNA transcript to yield the immediate precursors to the large and small rRNAs (23S and 16S). Processes some mRNAs, and tRNAs when they are encoded in the rRNA operon. Processes pre-crRNA and tracrRNA of type II CRISPR loci if present in the organism. This chain is Ribonuclease 3, found in Campylobacter jejuni (strain RM1221).